A 225-amino-acid chain; its full sequence is Membrane protein (225 aa).

Residues 1 to 20 are Virion surface-facing; sequence MSNETNCTLDFEQSVELFKE. A helical membrane pass occupies residues 21–41; it reads YNLFITAFLLFLTIILQYGYA. Topologically, residues 42–51 are intravirion; that stretch reads TRSKFIYILK. A helical membrane pass occupies residues 52–72; sequence MIVLWCFWPLNIAVGVISCIY. Over 73–77 the chain is Virion surface; that stretch reads PPNTG. Residues 78–98 traverse the membrane as a helical segment; the sequence is GLVAAIILTVFACLSFVGYWI. The Intravirion segment spans residues 99-225; the sequence is QSIRLFKRCR…VATGGSSLYT (127 aa).

This sequence belongs to the gammacoronaviruses M protein family. Homomultimer. Interacts with envelope E protein in the budding compartment of the host cell, which is located between endoplasmic reticulum and the Golgi complex. Forms a complex with HE and S proteins. Interacts with nucleocapsid N protein. This interaction probably participates in RNA packaging into the virus.

It is found in the virion membrane. Its subcellular location is the host Golgi apparatus membrane. In terms of biological role, component of the viral envelope that plays a central role in virus morphogenesis and assembly via its interactions with other viral proteins. This is Membrane protein from Gallus gallus (Chicken).